The sequence spans 353 residues: Outer membrane protein A (353 aa).

An N-terminal signal peptide occupies residues 1-21 (MKKTAIALAVALVGFATVAQA). Transmembrane regions (beta stranded) follow at residues 27–37 (TWYTGGKLGWS), 56–67 (QLGAGAFFGYQA), 71–79 (LGFEMGYDW), 97–108 (QGVQLAAKLSYP), 113–121 (LDVYTRLGG), 148–157 (PLVALGAEYA), 162–169 (WATRMEYQ), and 188–196 (LLSVGVSYR). 4 consecutive repeat copies span residues 208–209 (AP), 210–211 (TP), 212–213 (AP), and 214–215 (AP). The tract at residues 208-215 (APTPAPAP) is 4 X 2 AA approximate tandem repeats of A-P. An OmpA-like domain is found at 217–345 (VDTKRFTLKS…RVEIEVKGYK (129 aa)). The cysteines at positions 318 and 330 are disulfide-linked.

This sequence belongs to the outer membrane OOP (TC 1.B.6) superfamily. OmpA family. In terms of assembly, monomer and homodimer.

The protein resides in the cell outer membrane. Its function is as follows. With TolR probably plays a role in maintaining the position of the peptidoglycan cell wall in the periplasm. Acts as a porin with low permeability that allows slow penetration of small solutes; an internal gate slows down solute passage. The protein is Outer membrane protein A of Yersinia pseudotuberculosis serotype I (strain IP32953).